We begin with the raw amino-acid sequence, 261 residues long: Carbonic anhydrase 1 (261 aa).

Alanine 2 is modified (N-acetylalanine). Residues 4-261 (PDWGYDDKNG…LKGRTVRASF (258 aa)) enclose the Alpha-carbonic anhydrase domain. Catalysis depends on histidine 65, which acts as the Proton donor/acceptor. Residues histidine 95, histidine 97, and histidine 120 each contribute to the Zn(2+) site. Residues threonine 200 and 200 to 201 (TH) each bind substrate. Residues 238–261 (NPVPIQRNNRPTQPLKGRTVRASF) are disordered.

The protein belongs to the alpha-carbonic anhydrase family. Requires Zn(2+) as cofactor.

It localises to the cytoplasm. The enzyme catalyses hydrogencarbonate + H(+) = CO2 + H2O. The catalysed reaction is urea = cyanamide + H2O. Inhibited by acetazolamide. Its function is as follows. Catalyzes the reversible hydration of carbon dioxide. Can hydrate cyanamide to urea. The sequence is that of Carbonic anhydrase 1 (CA1) from Macaca mulatta (Rhesus macaque).